A 65-amino-acid chain; its full sequence is Large ribosomal subunit protein uL29 (65 aa).

The protein belongs to the universal ribosomal protein uL29 family.

This is Large ribosomal subunit protein uL29 from Coxiella burnetii (strain CbuK_Q154) (Coxiella burnetii (strain Q154)).